A 468-amino-acid polypeptide reads, in one-letter code: Nuclear pore complex protein Nup50 (468 aa).

The segment covering 1-16 (MAKRNAEKELTDRNWD) has biased composition (basic and acidic residues). A disordered region spans residues 1-26 (MAKRNAEKELTDRNWDQEDEAEEVGT). The residue at position 2 (Ala-2) is an N-acetylalanine. N6-acetyllysine is present on Lys-8. Residue Ser-52 is modified to Phosphoserine. Residues 76-77 (FG) form repeat 1. Residues 76–304 (FGSGAGGKPL…FSPGNSSLFG (229 aa)) are 5 X 2 AA repeats of F-G. The residue at position 83 (Lys-83) is an N6-acetyllysine. Repeat unit 2 spans residues 113–114 (FG). Disordered stretches follow at residues 122 to 148 (TTLVDKVSNPKTNGDSQQPSSSGLASS) and 201 to 224 (HGNSGRNSESESNKVAAETQSPSL). The residue at position 127 (Lys-127) is an N6-acetyllysine. Residues 137-148 (SQQPSSSGLASS) are compositionally biased toward low complexity. Residues 144–206 (GLASSKACVG…IEQQHGNSGR (63 aa)) are binding to CDKN1B. A phosphoserine mark is found at Ser-208 and Ser-221. Repeat 3 spans residues 225-226 (FG). Phosphoserine is present on Ser-234. The disordered stretch occupies residues 238-269 (FHGNKTEDTPDKKMEVASEKKTDPSSLGATSA). The span at 241–260 (NKTEDTPDKKMEVASEKKTD) shows a compositional bias: basic and acidic residues. Thr-246 and Thr-259 each carry phosphothreonine. A Phosphoserine modification is found at Ser-270. Copy 4 of the repeat occupies 273 to 274 (FG). A Phosphoserine modification is found at Ser-296. Copy 5 of the repeat occupies 303-304 (FG). The span at 304–317 (GKDTTQSKPVSSPF) shows a compositional bias: polar residues. Residues 304–345 (GKDTTQSKPVSSPFPTKPLEGQAEGDSGECKGGDEEENDEPP) are disordered. The 134-residue stretch at 335–468 (GGDEEENDEP…HKILLEKKDA (134 aa)) folds into the RanBD1 domain. A Glycyl lysine isopeptide (Lys-Gly) (interchain with G-Cter in SUMO2) cross-link involves residue Lys-353. Lys-450 carries the post-translational modification N6-acetyllysine.

In terms of assembly, interacts with Importin alpha-2, Importin beta, Importin beta-2, NUP153, Ran binding protein 7, CDKN1B and itself. Does not interact with TPR. As to expression, ubiquitous. Highest levels in testis, peripheral blood leukocytes and fetal liver.

The protein resides in the nucleus. It localises to the nuclear pore complex. The protein localises to the nucleus membrane. Component of the nuclear pore complex that has a direct role in nuclear protein import. Actively displaces NLSs from importin-alpha, and facilitates disassembly of the importin-alpha:beta-cargo complex and importin recycling. Interacts with regulatory proteins of cell cycle progression including CDKN1B. This interaction is required for correct intracellular transport and degradation of CDKN1B. This chain is Nuclear pore complex protein Nup50 (NUP50), found in Homo sapiens (Human).